Here is a 416-residue protein sequence, read N- to C-terminus: Mitochondrial inner membrane i-AAA protease complex subunit MGR1 (416 aa).

Residues 1-28 form a disordered region; it reads MAVFTPPSGNSNSTDHTHTQDDHDKDDN. At 1–56 the chain is on the mitochondrial intermembrane side; the sequence is MAVFTPPSGNSNSTDHTHTQDDHDKDDNDIKKFYIRPSLGLKLWGPLVPAPDNLPG. Positions 15–28 are enriched in basic and acidic residues; that stretch reads DHTHTQDDHDKDDN. The helical transmembrane segment at 57 to 73 threads the bilayer; sequence LYTLITIQSAVGFFALW. Residues 74-151 lie on the Mitochondrial matrix side of the membrane; that stretch reads RLRRLYKLPP…RQSRFVSVRK (78 aa). Residues 152-169 traverse the membrane as a helical segment; that stretch reads LLWGLFGSLLLSQSLLEL. Residues 170–416 lie on the Mitochondrial intermembrane side of the membrane; that stretch reads TRLNFLKYDP…PKALTNEKTH (247 aa). The segment covering 390–400 has biased composition (polar residues); it reads SHTKTPTSTDQ. The disordered stretch occupies residues 390-416; it reads SHTKTPTSTDQPLPGPTPKALTNEKTH.

It belongs to the MGR1 family. Component of the mitochondrial inner membrane i-AAA protease complex composed of at least MRG1 and YME1. Interacts directly with YME1.

Its subcellular location is the mitochondrion inner membrane. In terms of biological role, component of the mitochondrial inner membrane i-AAA protease complex required for mitochondrial inner membrane protein turnover. Required for growth of cells lacking the mitochondrial genome. The polypeptide is Mitochondrial inner membrane i-AAA protease complex subunit MGR1 (MGR1) (Saccharomyces cerevisiae (strain YJM789) (Baker's yeast)).